Consider the following 169-residue polypeptide: Lutropin/choriogonadotropin subunit beta (169 aa).

The signal sequence occupies residues 1–20 (MEMLQGLLLWMLLSVGGVWA). Intrachain disulfides connect Cys29–Cys77, Cys43–Cys92, Cys46–Cys130, Cys54–Cys108, Cys58–Cys110, and Cys113–Cys120. N-linked (GlcNAc...) asparagine glycosylation occurs at Asn33. Positions 131-169 (APQTSSSCKDPPSQPLTSTSTPTPGASRRSSHPLPINTS) are disordered. The span at 145 to 158 (PLTSTSTPTPGASR) shows a compositional bias: low complexity.

This sequence belongs to the glycoprotein hormones subunit beta family. In terms of assembly, heterodimer of a common alpha chain and a unique beta chain which confers biological specificity to thyrotropin, lutropin, follitropin and gonadotropin.

The protein resides in the secreted. Functionally, promotes spermatogenesis and ovulation by stimulating the testes and ovaries to synthesize steroids. This is Lutropin/choriogonadotropin subunit beta (LHB) from Equus asinus (Donkey).